Reading from the N-terminus, the 134-residue chain is Large ribosomal subunit protein bL20 (134 aa).

It belongs to the bacterial ribosomal protein bL20 family.

In terms of biological role, binds directly to 23S ribosomal RNA and is necessary for the in vitro assembly process of the 50S ribosomal subunit. It is not involved in the protein synthesizing functions of that subunit. The sequence is that of Large ribosomal subunit protein bL20 from Rhizobium leguminosarum bv. trifolii (strain WSM2304).